We begin with the raw amino-acid sequence, 390 residues long: Alpha-2B adrenergic receptor (390 aa).

Residues 1–25 (AIATVITFLILFTIFGNSLVILAVL) form a helical membrane-spanning segment. Residues 26–36 (TSRSLRAPQNL) are Cytoplasmic-facing. The helical transmembrane segment at 37–62 (FLVSLAAADIMVATLIIPFSLANELL) threads the bilayer. Residues 63–72 (GYWYFRRTWC) are Extracellular-facing. The cysteines at positions 72 and 151 are disulfide-linked. The helical transmembrane segment at 73-95 (EVYLALDVLFCTSSIVHLCAISL) threads the bilayer. Over 96–117 (DRYWAVSRALEYNSKRTPRRIK) the chain is Cytoplasmic. A helical transmembrane segment spans residues 118 to 140 (CIILTVWLIAAAISLPPLIYKGD). Residues 141–156 (QGPQPRGRPQCKLNQE) lie on the Extracellular side of the membrane. Residues 157-180 (AWYILSSSIGSFFAPCLIMILVYL) form a helical membrane-spanning segment. The Cytoplasmic portion of the chain corresponds to 181–354 (RIYLIAKRSH…LTREKRFTFV (174 aa)). 2 disordered regions span residues 191 to 218 (RRGP…PSAL) and 233 to 311 (EANG…PLQQ). Acidic residues predominate over residues 280 to 292 (LEEEADKEEEEEC). The helical transmembrane segment at 355-378 (LAVVIGVFVLCWFPFFFSYSLGAI) threads the bilayer. The Extracellular segment spans residues 379–390 (CPQHCKVPHGLF).

It belongs to the G-protein coupled receptor 1 family. Adrenergic receptor subfamily. ADRA2B sub-subfamily. In terms of assembly, interacts with RAB26. Interacts with PPP1R9B. Interacts with GGA1, GGA2 and GGA3.

Its subcellular location is the cell membrane. Functionally, alpha-2 adrenergic receptors mediate the catecholamine-induced inhibition of adenylate cyclase through the action of G proteins. This chain is Alpha-2B adrenergic receptor (ADRA2B), found in Dugong dugon (Dugong).